Reading from the N-terminus, the 89-residue chain is Small ribosomal subunit protein uS15 (89 aa).

Belongs to the universal ribosomal protein uS15 family. In terms of assembly, part of the 30S ribosomal subunit. Forms a bridge to the 50S subunit in the 70S ribosome, contacting the 23S rRNA.

One of the primary rRNA binding proteins, it binds directly to 16S rRNA where it helps nucleate assembly of the platform of the 30S subunit by binding and bridging several RNA helices of the 16S rRNA. Its function is as follows. Forms an intersubunit bridge (bridge B4) with the 23S rRNA of the 50S subunit in the ribosome. The sequence is that of Small ribosomal subunit protein uS15 from Geobacillus sp. (strain WCH70).